Consider the following 266-residue polypeptide: Putative carbamate hydrolase RutD (266 aa).

The region spanning 14 to 116 (PVVVLISGLG…VLVSVNGWLR (103 aa)) is the AB hydrolase-1 domain.

The protein belongs to the AB hydrolase superfamily. Hydrolase RutD family.

The catalysed reaction is carbamate + 2 H(+) = NH4(+) + CO2. Its function is as follows. Involved in pyrimidine catabolism. May facilitate the hydrolysis of carbamate, a reaction that can also occur spontaneously. This Escherichia coli O81 (strain ED1a) protein is Putative carbamate hydrolase RutD.